Here is a 112-residue protein sequence, read N- to C-terminus: cAMP-regulated phosphoprotein 19 (112 aa).

Methionine 1 carries the N-acetylmethionine modification. Positions 1–11 (MSAEVPEAASA) are enriched in low complexity. Residues 1 to 49 (MSAEVPEAASAEEQKEMEDKVTSPEKAEEAKLKARYPHLGQKPGGSDFL) form a disordered region. Serine 2 bears the N-acetylserine mark. Phosphoserine is present on residues serine 2 and serine 23. Over residues 12-32 (EEQKEMEDKVTSPEKAEEAKL) the composition is skewed to basic and acidic residues. Phosphoserine; by GWL occurs at positions 62 and 104. Residues 73–112 (KNKQLPTAAPDKTEVTGDHIPTPQDLPQRKPSLVASKLAG) form a disordered region. Serine 104 carries the phosphoserine; by PKA modification. Lysine 109 carries the N6-acetyllysine modification.

Belongs to the endosulfine family. Interacts (when phosphorylated at Ser-62) with PPP2R2D. Interacts with SNCA. Interacts with PPP2R2A; the interaction is direct and this interaction inhibits PP2A activity. Post-translationally, phosphorylation at Ser-62 by MASTL/GWL during mitosis is essential for interaction with PPP2R2D (PR55-delta) and subsequent inactivation of PP2A. Phosphorylated by PKA.

The protein localises to the cytoplasm. Its function is as follows. Protein phosphatase inhibitor that specifically inhibits protein phosphatase 2A (PP2A) during mitosis. Inhibition of PP2A is enhanced when ARPP19 is phosphorylated. When phosphorylated at Ser-62 during mitosis, specifically interacts with PPP2R2D (PR55-delta) and inhibits its activity, leading to inactivation of PP2A, an essential condition to keep cyclin-B1-CDK1 activity high during M phase. May indirectly enhance GAP-43 expression. The protein is cAMP-regulated phosphoprotein 19 (ARPP19) of Homo sapiens (Human).